Consider the following 207-residue polypeptide: MPTKIQIVFYSSYGHIYKMAEAIAAGAREVGDVEVTLLQVPELMPEEVQVKSGIKGYRAAFGSIPYATPEVLAEADAIIFGTPTRFGNMCSQMRNFLDQTGGLWMSGGLIGKVGSVFTSTASQHGGQETTITSFHTTLLHHGMVIVGVPYSEPGLTNMTEISGGTPYGASTLAGADGSRQPSENELQIARFQGKHVATIAKRLANNK.

Residues 5 to 196 (IQIVFYSSYG…QIARFQGKHV (192 aa)) enclose the Flavodoxin-like domain. Residues 11–16 (SSYGHI), 84–86 (TRF), 119–125 (STASQHG), and His-140 contribute to the FMN site. Residue Tyr-13 coordinates NADP(+).

It belongs to the WrbA family. In terms of assembly, homodimer. It depends on FMN as a cofactor.

The enzyme catalyses 1,4-benzoquinone + NADPH + H(+) = hydroquinone + NADP(+). It functions in the pathway xenobiotic degradation; 4-nitrophenol degradation. Its function is as follows. Involved in the degradation of para-nitrophenol (PNP). Catalyzes the reduction of p-benzoquinone to hydroquinone. The protein is p-benzoquinone reductase (pnpB) of Pseudomonas sp. (strain WBC-3).